Reading from the N-terminus, the 317-residue chain is Beta-ketoacyl-[acyl-carrier-protein] synthase III (317 aa).

Residues Cys112 and His244 contribute to the active site. Residues 245 to 249 (QANLR) form an ACP-binding region. Asn274 is an active-site residue.

It belongs to the thiolase-like superfamily. FabH family. In terms of assembly, homodimer.

The protein resides in the cytoplasm. The catalysed reaction is malonyl-[ACP] + acetyl-CoA + H(+) = 3-oxobutanoyl-[ACP] + CO2 + CoA. It participates in lipid metabolism; fatty acid biosynthesis. Its function is as follows. Catalyzes the condensation reaction of fatty acid synthesis by the addition to an acyl acceptor of two carbons from malonyl-ACP. Catalyzes the first condensation reaction which initiates fatty acid synthesis and may therefore play a role in governing the total rate of fatty acid production. Possesses both acetoacetyl-ACP synthase and acetyl transacylase activities. Its substrate specificity determines the biosynthesis of branched-chain and/or straight-chain of fatty acids. This Serratia proteamaculans (strain 568) protein is Beta-ketoacyl-[acyl-carrier-protein] synthase III.